We begin with the raw amino-acid sequence, 368 residues long: 3-dehydroquinate synthase (368 aa).

NAD(+) contacts are provided by residues 110–114, 134–135, Lys147, and Lys156; these read GVIGD and TS. Residues Glu189, His254, and His271 each contribute to the Zn(2+) site.

Belongs to the sugar phosphate cyclases superfamily. Dehydroquinate synthase family. It depends on NAD(+) as a cofactor. The cofactor is Co(2+). Zn(2+) is required as a cofactor.

It is found in the cytoplasm. The enzyme catalyses 7-phospho-2-dehydro-3-deoxy-D-arabino-heptonate = 3-dehydroquinate + phosphate. The protein operates within metabolic intermediate biosynthesis; chorismate biosynthesis; chorismate from D-erythrose 4-phosphate and phosphoenolpyruvate: step 2/7. Its function is as follows. Catalyzes the conversion of 3-deoxy-D-arabino-heptulosonate 7-phosphate (DAHP) to dehydroquinate (DHQ). In Thermosynechococcus vestitus (strain NIES-2133 / IAM M-273 / BP-1), this protein is 3-dehydroquinate synthase.